A 457-amino-acid chain; its full sequence is Interferon regulatory factor 7 (457 aa).

The IRF tryptophan pentad repeat DNA-binding region spans 9-126 (RVLFGDWLLG…DPHKVYELSR (118 aa)). K92 carries the N6-acetyllysine; by KAT2A and KAT2B modification. The segment at 238-410 (RSLGFLDVTI…TLILVKLEPW (173 aa)) is necessary for the interaction with NMI. Residue K329 forms a Glycyl lysine isopeptide (Lys-Gly) (interchain with G-Cter in ubiquitin) linkage. Glycyl lysine isopeptide (Lys-Gly) (interchain with G-Cter in SUMO) cross-links involve residues K398 and K400. 3 positions are modified to phosphoserine: S425, S426, and S429. S431 carries the phosphoserine; by TBK1 and IKKE modification. Phosphoserine is present on residues S437, S438, and S441.

The protein belongs to the IRF family. Monomer. Homodimer; phosphorylation-induced. Heterodimer with IRF3. Interacts with TICAM1 and TICAM2. Interacts with MYD88 and TRAF6. Interacts with NMI; the interaction is direct and leads to the inhibition of IRF7-mediated type I IFN production. Interacts with GBP4; preventing interaction between TRAF6 and IRF7, resulting in impaired TRAF6-mediated IRF7 ubiquitination. Interacts with TARBP2; this interaction prevents IRF7 phosphorylation and activation. In terms of processing, acetylation inhibits its DNA-binding ability and activity. In response to a viral infection, phosphorylated by TBK1 and IKBKE1. Phosphorylation, and subsequent activation is inhibited by vaccinia virus protein E3. In TLR7- and TLR9-mediated signaling pathway, phosphorylated by IRAK1. Post-translationally, TRAF6-mediated ubiquitination is required for IRF7 activation. TRIM35 mediates IRF7 'Lys-48'-linked polyubiquitination and subsequent proteasomal degradation. 'Lys-48'-linked polyubiquitination and subsequent proteasomal degradation is NMI-dependent in response to Sendai virus infection. Ubiquitinated by UBE3C, leading to its degradation. In terms of processing, sumoylated by TRIM28, which inhibits its transactivation activity. 'Lys-63'-linked ubiquitination by NEURL3 promotes IRF7 activation.

It is found in the nucleus. The protein localises to the cytoplasm. In the absence of viral infection, maintained as a monomer in an autoinhibited state and phosphorylation disrupts this autoinhibition leading to the liberation of the DNA-binding and dimerization activities and its nuclear localization where it can activate type I IFN and ISG genes. Key transcriptional regulator of type I interferon (IFN)-dependent immune responses and plays a critical role in the innate immune response against DNA and RNA viruses. Regulates the transcription of type I IFN genes (IFN-alpha and IFN-beta) and IFN-stimulated genes (ISG) by binding to an interferon-stimulated response element (ISRE) in their promoters. Can efficiently activate both the IFN-beta (IFNB) and the IFN-alpha (IFNA) genes and mediate their induction via both the virus-activated, MyD88-independent pathway and the TLR-activated, MyD88-dependent pathway. Induces transcription of ubiquitin hydrolase USP25 mRNA in response to lipopolysaccharide (LPS) or viral infection in a type I IFN-dependent manner. Required during both the early and late phases of the IFN gene induction but is more critical for the late than for the early phase. Exists in an inactive form in the cytoplasm of uninfected cells and following viral infection, double-stranded RNA (dsRNA), or toll-like receptor (TLR) signaling, becomes phosphorylated by IKBKE and TBK1 kinases. This induces a conformational change, leading to its dimerization and nuclear localization where along with other coactivators it can activate transcription of the type I IFN and ISG genes. Can also play a role in regulating adaptive immune responses by inducing PSMB9/LMP2 expression, either directly or through induction of IRF1. Binds to the Q promoter (Qp) of EBV nuclear antigen 1 a (EBNA1) and may play a role in the regulation of EBV latency. Can activate distinct gene expression programs in macrophages and regulate the anti-tumor properties of primary macrophages. This Mus musculus (Mouse) protein is Interferon regulatory factor 7 (Irf7).